The chain runs to 79 residues: Translational regulator CsrA (79 aa).

It belongs to the CsrA/RsmA family. Homodimer; the beta-strands of each monomer intercalate to form a hydrophobic core, while the alpha-helices form wings that extend away from the core.

The protein localises to the cytoplasm. Its function is as follows. A translational regulator that binds mRNA to regulate translation initiation and/or mRNA stability. Usually binds in the 5'-UTR at or near the Shine-Dalgarno sequence preventing ribosome-binding, thus repressing translation. Its main target seems to be the major flagellin gene, while its function is anatagonized by FliW. In Geotalea uraniireducens (strain Rf4) (Geobacter uraniireducens), this protein is Translational regulator CsrA.